The primary structure comprises 230 residues: Small ribosomal subunit protein uS3 (230 aa).

Residues 39–107 (IRKFLTEKLK…PAQINISEVR (69 aa)) form the KH type-2 domain.

This sequence belongs to the universal ribosomal protein uS3 family. In terms of assembly, part of the 30S ribosomal subunit. Forms a tight complex with proteins S10 and S14.

Its function is as follows. Binds the lower part of the 30S subunit head. Binds mRNA in the 70S ribosome, positioning it for translation. This is Small ribosomal subunit protein uS3 from Psychromonas ingrahamii (strain DSM 17664 / CCUG 51855 / 37).